A 304-amino-acid chain; its full sequence is Bifunctional protein FolD (304 aa).

NADP(+)-binding positions include 176–178 (GAS), Ile201, and Ile242.

Belongs to the tetrahydrofolate dehydrogenase/cyclohydrolase family. As to quaternary structure, homodimer.

The catalysed reaction is (6R)-5,10-methylene-5,6,7,8-tetrahydrofolate + NADP(+) = (6R)-5,10-methenyltetrahydrofolate + NADPH. It carries out the reaction (6R)-5,10-methenyltetrahydrofolate + H2O = (6R)-10-formyltetrahydrofolate + H(+). It participates in one-carbon metabolism; tetrahydrofolate interconversion. In terms of biological role, catalyzes the oxidation of 5,10-methylenetetrahydrofolate to 5,10-methenyltetrahydrofolate and then the hydrolysis of 5,10-methenyltetrahydrofolate to 10-formyltetrahydrofolate. The sequence is that of Bifunctional protein FolD from Gluconobacter oxydans (strain 621H) (Gluconobacter suboxydans).